A 335-amino-acid polypeptide reads, in one-letter code: Phosphate acyltransferase (335 aa).

The protein belongs to the PlsX family. As to quaternary structure, homodimer. Probably interacts with PlsY.

The protein localises to the cytoplasm. The catalysed reaction is a fatty acyl-[ACP] + phosphate = an acyl phosphate + holo-[ACP]. Its pathway is lipid metabolism; phospholipid metabolism. In terms of biological role, catalyzes the reversible formation of acyl-phosphate (acyl-PO(4)) from acyl-[acyl-carrier-protein] (acyl-ACP). This enzyme utilizes acyl-ACP as fatty acyl donor, but not acyl-CoA. The polypeptide is Phosphate acyltransferase (Streptococcus pyogenes serotype M28 (strain MGAS6180)).